The primary structure comprises 173 residues: Ribosome maturation factor RimM (173 aa).

The PRC barrel domain occupies 95 to 173 (EGEYYWRQLE…LMVVDWDPDF (79 aa)).

The protein belongs to the RimM family. In terms of assembly, binds ribosomal protein uS19.

The protein localises to the cytoplasm. An accessory protein needed during the final step in the assembly of 30S ribosomal subunit, possibly for assembly of the head region. Essential for efficient processing of 16S rRNA. May be needed both before and after RbfA during the maturation of 16S rRNA. It has affinity for free ribosomal 30S subunits but not for 70S ribosomes. The chain is Ribosome maturation factor RimM from Hahella chejuensis (strain KCTC 2396).